We begin with the raw amino-acid sequence, 337 residues long: MSIKIAIDAMGGDHGIKVTVPASLEALSKFSDISIVLVGNQPLIEAELANHKYDKNRLSVEHAEQIVEMDDLPSKALRNKRKSSMRIALNLVKDDVAQACVSAGNTGALMAVSKFVLKTLPGIDRPAICTQMPTMKGHVHVLDLGANVGADGQSLAQFAVMGSVLAQAVDSNSRPRVGLLNIGEEEIKGHQRIKDANEILKSSDAINYVGYVEGDEIFKGDVDVVSCDGFDGNVALKASEGVAKMISFYLRAAFNKNLLTKLAGLVVYPVLKAFKAKVDPRRYNGASFLGLRKIVIKSHGGADVFSFYHAIAEARLEVNKNVPELIATEVKAILETH.

The protein belongs to the PlsX family. As to quaternary structure, homodimer. Probably interacts with PlsY.

The protein localises to the cytoplasm. It carries out the reaction a fatty acyl-[ACP] + phosphate = an acyl phosphate + holo-[ACP]. The protein operates within lipid metabolism; phospholipid metabolism. Functionally, catalyzes the reversible formation of acyl-phosphate (acyl-PO(4)) from acyl-[acyl-carrier-protein] (acyl-ACP). This enzyme utilizes acyl-ACP as fatty acyl donor, but not acyl-CoA. The polypeptide is Phosphate acyltransferase (Hydrogenovibrio crunogenus (strain DSM 25203 / XCL-2) (Thiomicrospira crunogena)).